Reading from the N-terminus, the 161-residue chain is Nucleotide-binding protein Plav_2177 (161 aa).

The protein belongs to the YajQ family.

In terms of biological role, nucleotide-binding protein. This is Nucleotide-binding protein Plav_2177 from Parvibaculum lavamentivorans (strain DS-1 / DSM 13023 / NCIMB 13966).